Consider the following 173-residue polypeptide: Photosystem I assembly protein Ycf3 (173 aa).

TPR repeat units lie at residues 35-68 (AFVY…EEDT), 72-105 (GYIL…NPRL), and 120-153 (GEKA…APNN).

It belongs to the Ycf3 family.

The protein resides in the cellular thylakoid membrane. Functionally, essential for the assembly of the photosystem I (PSI) complex. May act as a chaperone-like factor to guide the assembly of the PSI subunits. This Trichormus variabilis (strain ATCC 29413 / PCC 7937) (Anabaena variabilis) protein is Photosystem I assembly protein Ycf3.